The chain runs to 149 residues: MSEPQRPHVVIFTDGACSGNPGPGGWGAILRFGEIEKELKGGENPTTNNRMELLAAISALEALKRSAIVDLTTDSQYVRQGITSWIFNWKKNGWRTSDKKPVKNVDLWQRLDAALKPHEVRWHWIKGHAGHAENERADELAREGLAENR.

The RNase H type-1 domain occupies 5 to 146; sequence QRPHVVIFTD…ADELAREGLA (142 aa). 4 residues coordinate Mg(2+): Asp14, Glu52, Asp74, and Asp138.

This sequence belongs to the RNase H family. In terms of assembly, monomer. Mg(2+) is required as a cofactor.

Its subcellular location is the cytoplasm. The enzyme catalyses Endonucleolytic cleavage to 5'-phosphomonoester.. Its function is as follows. Endonuclease that specifically degrades the RNA of RNA-DNA hybrids. This chain is Ribonuclease H, found in Afipia carboxidovorans (strain ATCC 49405 / DSM 1227 / KCTC 32145 / OM5) (Oligotropha carboxidovorans).